The following is a 729-amino-acid chain: Fatty acid oxidation complex subunit alpha (729 aa).

Residues 1–189 (MLYKGDTLYL…KIGLVDGVVK (189 aa)) are enoyl-CoA hydratase/isomerase. Substrate is bound at residue Asp-296. The tract at residues 311 to 729 (ETPKQAAVLG…ARPVGDLKTA (419 aa)) is 3-hydroxyacyl-CoA dehydrogenase. NAD(+)-binding positions include Met-324, Asp-343, 400 to 402 (IVE), Lys-407, and Ser-429. His-450 functions as the For 3-hydroxyacyl-CoA dehydrogenase activity in the catalytic mechanism. Residue Asn-453 coordinates NAD(+). Asn-500 and Tyr-660 together coordinate substrate. The tract at residues 708–729 (RHNEPYYPPVEPARPVGDLKTA) is disordered.

In the N-terminal section; belongs to the enoyl-CoA hydratase/isomerase family. It in the C-terminal section; belongs to the 3-hydroxyacyl-CoA dehydrogenase family. Heterotetramer of two alpha chains (FadB) and two beta chains (FadA).

It carries out the reaction a (3S)-3-hydroxyacyl-CoA + NAD(+) = a 3-oxoacyl-CoA + NADH + H(+). The enzyme catalyses a (3S)-3-hydroxyacyl-CoA = a (2E)-enoyl-CoA + H2O. The catalysed reaction is a 4-saturated-(3S)-3-hydroxyacyl-CoA = a (3E)-enoyl-CoA + H2O. It catalyses the reaction (3S)-3-hydroxybutanoyl-CoA = (3R)-3-hydroxybutanoyl-CoA. It carries out the reaction a (3Z)-enoyl-CoA = a 4-saturated (2E)-enoyl-CoA. The enzyme catalyses a (3E)-enoyl-CoA = a 4-saturated (2E)-enoyl-CoA. The protein operates within lipid metabolism; fatty acid beta-oxidation. Involved in the aerobic and anaerobic degradation of long-chain fatty acids via beta-oxidation cycle. Catalyzes the formation of 3-oxoacyl-CoA from enoyl-CoA via L-3-hydroxyacyl-CoA. It can also use D-3-hydroxyacyl-CoA and cis-3-enoyl-CoA as substrate. This chain is Fatty acid oxidation complex subunit alpha, found in Escherichia coli O157:H7.